Here is a 122-residue protein sequence, read N- to C-terminus: uncharacterized protein (122 aa).

Residues 79-90 (NERVTSRVTNSR) show a composition bias toward polar residues. The interval 79 to 122 (NERVTSRVTNSRTESESNGNGNATGNTSSNANSNGNANGIYIRK) is disordered. The segment covering 94–122 (ESNGNGNATGNTSSNANSNGNANGIYIRK) has biased composition (low complexity).

This is an uncharacterized protein from Leptolyngbya boryana (Plectonema boryanum).